We begin with the raw amino-acid sequence, 299 residues long: ATP phosphoribosyltransferase (299 aa).

Belongs to the ATP phosphoribosyltransferase family. Long subfamily. In terms of assembly, equilibrium between an active dimeric form, an inactive hexameric form and higher aggregates. Interconversion between the various forms is largely reversible and is influenced by the natural substrates and inhibitors of the enzyme. It depends on Mg(2+) as a cofactor.

It localises to the cytoplasm. The catalysed reaction is 1-(5-phospho-beta-D-ribosyl)-ATP + diphosphate = 5-phospho-alpha-D-ribose 1-diphosphate + ATP. The protein operates within amino-acid biosynthesis; L-histidine biosynthesis; L-histidine from 5-phospho-alpha-D-ribose 1-diphosphate: step 1/9. Feedback inhibited by histidine. Catalyzes the condensation of ATP and 5-phosphoribose 1-diphosphate to form N'-(5'-phosphoribosyl)-ATP (PR-ATP). Has a crucial role in the pathway because the rate of histidine biosynthesis seems to be controlled primarily by regulation of HisG enzymatic activity. In Escherichia coli O8 (strain IAI1), this protein is ATP phosphoribosyltransferase.